Consider the following 800-residue polypeptide: Signaling protein YkoW (800 aa).

7 helical membrane passes run 5–27 (VTYNTTLICLSILIACTASYISL), 44–66 (WLIGGSLIMGFGIWSMHFVGMMA), 76–98 (EFMPLMAAIGASVSGSFVSLYFV), 103–125 (LTYYRLLTGSVVLGASIASMHYI), 135–157 (IIYEPILFTVSIIIAIAASFVSL), 178–200 (VSSIVMGIGISGMHYTGMLAATF), and 215–237 (TFHWSIFVTLIIFCIQTLLLFSS). Positions 7–201 (YNTTLICLSI…YTGMLAATFH (195 aa)) constitute an MHYT domain. The PAS domain occupies 255–319 (QRFQSLIVHN…FEQVKKDKQA (65 aa)). A GGDEF domain is found at 402 to 536 (YNTVVFFLDL…NKSKYRYYSF (135 aa)). The region spanning 545–798 (KLNQEMVLRE…QFEQFIIEQP (254 aa)) is the EAL domain.

Its subcellular location is the cell membrane. Probable signaling protein whose physiological role is not yet known. The sequence is that of Signaling protein YkoW (ykoW) from Bacillus subtilis (strain 168).